The chain runs to 457 residues: uncharacterized protein (457 aa).

The region spanning 5-63 (PVEEGQKFPLTIRRMGINGEGIGYFKKAVVFVPGAITGEEVVVEAVKVRDRFTEAKLNK) is the TRAM domain. Positions 76, 82, 85, and 166 each coordinate [4Fe-4S] cluster. Positions 290, 319, 340, and 388 each coordinate S-adenosyl-L-methionine. The Nucleophile role is filled by cysteine 415.

The protein belongs to the class I-like SAM-binding methyltransferase superfamily. RNA M5U methyltransferase family.

This is an uncharacterized protein from Listeria innocua serovar 6a (strain ATCC BAA-680 / CLIP 11262).